The primary structure comprises 211 residues: Superoxide dismutase [Mn] (211 aa).

Mn(2+) is bound by residues histidine 27, histidine 82, aspartate 165, and histidine 169.

Belongs to the iron/manganese superoxide dismutase family. As to quaternary structure, homodimer. Requires Mn(2+) as cofactor.

The catalysed reaction is 2 superoxide + 2 H(+) = H2O2 + O2. Its function is as follows. Destroys superoxide anion radicals which are normally produced within the cells and which are toxic to biological systems. In Bordetella pertussis (strain Tohama I / ATCC BAA-589 / NCTC 13251), this protein is Superoxide dismutase [Mn] (sodA).